We begin with the raw amino-acid sequence, 135 residues long: Small ribosomal subunit protein uS11 (135 aa).

The protein belongs to the universal ribosomal protein uS11 family. In terms of assembly, part of the 30S ribosomal subunit. Interacts with proteins S7 and S18. Binds to IF-3.

Located on the platform of the 30S subunit, it bridges several disparate RNA helices of the 16S rRNA. Forms part of the Shine-Dalgarno cleft in the 70S ribosome. This Solibacter usitatus (strain Ellin6076) protein is Small ribosomal subunit protein uS11.